We begin with the raw amino-acid sequence, 22 residues long: Rothein 4.1 (22 aa).

This sequence belongs to the frog skin active peptide (FSAP) family. Rothein subfamily. Expressed by the skin dorsal glands.

The protein localises to the secreted. Lacks antimicrobial activity. Does not inhibit the formation of NO by neuronal nitric oxide. This is Rothein 4.1 from Litoria rothii (Roth's tree frog).